A 644-amino-acid polypeptide reads, in one-letter code: Biosynthetic arginine decarboxylase (644 aa).

An N6-(pyridoxal phosphate)lysine modification is found at lysine 100. Residue 282 to 292 coordinates substrate; the sequence is CDVGGGLAIDY.

It belongs to the Orn/Lys/Arg decarboxylase class-II family. SpeA subfamily. Mg(2+) serves as cofactor. Requires pyridoxal 5'-phosphate as cofactor.

It carries out the reaction L-arginine + H(+) = agmatine + CO2. Functionally, catalyzes the biosynthesis of agmatine from arginine. This chain is Biosynthetic arginine decarboxylase, found in Gloeobacter violaceus (strain ATCC 29082 / PCC 7421).